We begin with the raw amino-acid sequence, 359 residues long: UDP-N-acetylglucosamine--N-acetylmuramyl-(pentapeptide) pyrophosphoryl-undecaprenol N-acetylglucosamine transferase (359 aa).

UDP-N-acetyl-alpha-D-glucosamine-binding positions include 15 to 17 (SGG), Asn127, Arg164, Ser192, Ile246, 265 to 270 (ALTVSE), and Gln290.

Belongs to the glycosyltransferase 28 family. MurG subfamily.

It is found in the cell membrane. It carries out the reaction di-trans,octa-cis-undecaprenyl diphospho-N-acetyl-alpha-D-muramoyl-L-alanyl-D-glutamyl-meso-2,6-diaminopimeloyl-D-alanyl-D-alanine + UDP-N-acetyl-alpha-D-glucosamine = di-trans,octa-cis-undecaprenyl diphospho-[N-acetyl-alpha-D-glucosaminyl-(1-&gt;4)]-N-acetyl-alpha-D-muramoyl-L-alanyl-D-glutamyl-meso-2,6-diaminopimeloyl-D-alanyl-D-alanine + UDP + H(+). It participates in cell wall biogenesis; peptidoglycan biosynthesis. In terms of biological role, cell wall formation. Catalyzes the transfer of a GlcNAc subunit on undecaprenyl-pyrophosphoryl-MurNAc-pentapeptide (lipid intermediate I) to form undecaprenyl-pyrophosphoryl-MurNAc-(pentapeptide)GlcNAc (lipid intermediate II). This is UDP-N-acetylglucosamine--N-acetylmuramyl-(pentapeptide) pyrophosphoryl-undecaprenol N-acetylglucosamine transferase from Wigglesworthia glossinidia brevipalpis.